The chain runs to 85 residues: Sec-independent protein translocase protein TatA (85 aa).

The chain crosses the membrane as a helical span at residues 1–21; sequence MGSMSIWHWLVVGVLVLLLFG. The disordered stretch occupies residues 39–85; it reads FKKGMSEEDEPTQPAEPRPTPRLQQQPPIEPNADPKLQPMQDDRPQH.

It belongs to the TatA/E family. In terms of assembly, the Tat system comprises two distinct complexes: a TatABC complex, containing multiple copies of TatA, TatB and TatC subunits, and a separate TatA complex, containing only TatA subunits. Substrates initially bind to the TatABC complex, which probably triggers association of the separate TatA complex to form the active translocon.

The protein localises to the cell inner membrane. In terms of biological role, part of the twin-arginine translocation (Tat) system that transports large folded proteins containing a characteristic twin-arginine motif in their signal peptide across membranes. TatA could form the protein-conducting channel of the Tat system. This is Sec-independent protein translocase protein TatA from Rhizorhabdus wittichii (strain DSM 6014 / CCUG 31198 / JCM 15750 / NBRC 105917 / EY 4224 / RW1) (Sphingomonas wittichii).